The sequence spans 333 residues: DNA-directed RNA polymerase subunit alpha (333 aa).

Positions 1-233 are alpha N-terminal domain (alpha-NTD); sequence MVREKVKVST…NLFIPFLHVE (233 aa). The tract at residues 267 to 333 is alpha C-terminal domain (alpha-CTD); the sequence is LVFQYIFIDQ…LEKNRKFISN (67 aa).

Belongs to the RNA polymerase alpha chain family. In plastids the minimal PEP RNA polymerase catalytic core is composed of four subunits: alpha, beta, beta', and beta''. When a (nuclear-encoded) sigma factor is associated with the core the holoenzyme is formed, which can initiate transcription.

The protein resides in the plastid. The protein localises to the chloroplast. The catalysed reaction is RNA(n) + a ribonucleoside 5'-triphosphate = RNA(n+1) + diphosphate. DNA-dependent RNA polymerase catalyzes the transcription of DNA into RNA using the four ribonucleoside triphosphates as substrates. The chain is DNA-directed RNA polymerase subunit alpha from Aethionema grandiflorum (Persian stone-cress).